Consider the following 233-residue polypeptide: Orotate phosphoribosyltransferase (233 aa).

Residue Lys29 coordinates 5-phospho-alpha-D-ribose 1-diphosphate. Phe37–Phe38 lines the orotate pocket. 5-phospho-alpha-D-ribose 1-diphosphate is bound by residues Tyr79–Lys80, Arg109, Lys110, Lys113, His115, and Asp135–Ala143. Orotate contacts are provided by Thr139 and Arg167.

Belongs to the purine/pyrimidine phosphoribosyltransferase family. PyrE subfamily. In terms of assembly, homodimer.

It catalyses the reaction orotidine 5'-phosphate + diphosphate = orotate + 5-phospho-alpha-D-ribose 1-diphosphate. It functions in the pathway pyrimidine metabolism; UMP biosynthesis via de novo pathway; UMP from orotate: step 1/2. Its function is as follows. Catalyzes the transfer of a ribosyl phosphate group from 5-phosphoribose 1-diphosphate to orotate, leading to the formation of orotidine monophosphate (OMP). This is Orotate phosphoribosyltransferase (ura-5) from Neurospora crassa (strain ATCC 24698 / 74-OR23-1A / CBS 708.71 / DSM 1257 / FGSC 987).